Here is a 353-residue protein sequence, read N- to C-terminus: Phospho-N-acetylmuramoyl-pentapeptide-transferase (353 aa).

The next 10 membrane-spanning stretches (helical) occupy residues 24 to 44, 66 to 86, 88 to 108, 129 to 149, 160 to 180, 192 to 212, 229 to 249, 256 to 276, 281 to 301, and 330 to 350; these read LGFFIAFFLTLFLMPKFILWA, TPTMGGIVFVFATIIASLLCA, LGNPYVLLGIIVLVGFSFVGF, FGMLFVLSLVVSVLLSVKGLD, PLFEMPTALAVGFWVLVFLSA, GLASVPSIFTLLSLSIFVYVA, VGELFVISLALIGSLFGFLWY, VFMGDSGSLALGGFIAYNAIV, ILLVLMGSIFVIETLSVILQV, and KVIVRFWIISMLSNLVALLSL.

The protein belongs to the glycosyltransferase 4 family. MraY subfamily. The cofactor is Mg(2+).

The protein localises to the cell inner membrane. The enzyme catalyses UDP-N-acetyl-alpha-D-muramoyl-L-alanyl-gamma-D-glutamyl-meso-2,6-diaminopimeloyl-D-alanyl-D-alanine + di-trans,octa-cis-undecaprenyl phosphate = di-trans,octa-cis-undecaprenyl diphospho-N-acetyl-alpha-D-muramoyl-L-alanyl-D-glutamyl-meso-2,6-diaminopimeloyl-D-alanyl-D-alanine + UMP. It participates in cell wall biogenesis; peptidoglycan biosynthesis. Catalyzes the initial step of the lipid cycle reactions in the biosynthesis of the cell wall peptidoglycan: transfers peptidoglycan precursor phospho-MurNAc-pentapeptide from UDP-MurNAc-pentapeptide onto the lipid carrier undecaprenyl phosphate, yielding undecaprenyl-pyrophosphoryl-MurNAc-pentapeptide, known as lipid I. The polypeptide is Phospho-N-acetylmuramoyl-pentapeptide-transferase (Helicobacter acinonychis (strain Sheeba)).